The sequence spans 41 residues: Large ribosomal subunit protein bL36 (41 aa).

Belongs to the bacterial ribosomal protein bL36 family.

The chain is Large ribosomal subunit protein bL36 from Orientia tsutsugamushi (strain Boryong) (Rickettsia tsutsugamushi).